Reading from the N-terminus, the 196-residue chain is Corrinoid adenosyltransferase CobA (196 aa).

36 to 42 (GNGKGKT) is an ATP binding site.

Belongs to the Cob(I)alamin adenosyltransferase family. In terms of assembly, homodimer.

It localises to the cytoplasm. The catalysed reaction is 2 cob(II)yrinate a,c diamide + reduced [electron-transfer flavoprotein] + 2 ATP = 2 adenosylcob(III)yrinate a,c-diamide + 2 triphosphate + oxidized [electron-transfer flavoprotein] + 3 H(+). It carries out the reaction 2 cob(II)alamin + reduced [electron-transfer flavoprotein] + 2 ATP = 2 adenosylcob(III)alamin + 2 triphosphate + oxidized [electron-transfer flavoprotein] + 3 H(+). The protein operates within cofactor biosynthesis; adenosylcobalamin biosynthesis; adenosylcobalamin from cob(II)yrinate a,c-diamide: step 2/7. Its function is as follows. Required for both de novo synthesis of the corrin ring for the assimilation of exogenous corrinoids. Participates in the adenosylation of a variety of incomplete and complete corrinoids. In Salmonella typhimurium (strain LT2 / SGSC1412 / ATCC 700720), this protein is Corrinoid adenosyltransferase CobA (btuR).